We begin with the raw amino-acid sequence, 377 residues long: Bifunctional enzyme IspD/IspF (377 aa).

A 2-C-methyl-D-erythritol 4-phosphate cytidylyltransferase region spans residues 1-221; the sequence is MTTAAIIVAA…ERILRQDMDV (221 aa). Residues 222–377 are 2-C-methyl-D-erythritol 2,4-cyclodiphosphate synthase; it reads RLGNGYDVHR…ALATACLVKP (156 aa). Residues Asp228 and His230 each coordinate a divalent metal cation. Residues 228 to 230 and 254 to 255 each bind 4-CDP-2-C-methyl-D-erythritol 2-phosphate; these read DVH and HS. An a divalent metal cation-binding site is contributed by His262. Residues 276–278, 352–355, Phe359, and Arg362 each bind 4-CDP-2-C-methyl-D-erythritol 2-phosphate; these read DIG and TTSE.

In the N-terminal section; belongs to the IspD/TarI cytidylyltransferase family. IspD subfamily. It in the C-terminal section; belongs to the IspF family. A divalent metal cation is required as a cofactor.

It carries out the reaction 2-C-methyl-D-erythritol 4-phosphate + CTP + H(+) = 4-CDP-2-C-methyl-D-erythritol + diphosphate. The catalysed reaction is 4-CDP-2-C-methyl-D-erythritol 2-phosphate = 2-C-methyl-D-erythritol 2,4-cyclic diphosphate + CMP. The protein operates within isoprenoid biosynthesis; isopentenyl diphosphate biosynthesis via DXP pathway; isopentenyl diphosphate from 1-deoxy-D-xylulose 5-phosphate: step 2/6. Its pathway is isoprenoid biosynthesis; isopentenyl diphosphate biosynthesis via DXP pathway; isopentenyl diphosphate from 1-deoxy-D-xylulose 5-phosphate: step 4/6. Functionally, bifunctional enzyme that catalyzes the formation of 4-diphosphocytidyl-2-C-methyl-D-erythritol from CTP and 2-C-methyl-D-erythritol 4-phosphate (MEP) (IspD), and catalyzes the conversion of 4-diphosphocytidyl-2-C-methyl-D-erythritol 2-phosphate (CDP-ME2P) to 2-C-methyl-D-erythritol 2,4-cyclodiphosphate (ME-CPP) with a corresponding release of cytidine 5-monophosphate (CMP) (IspF). In Ruegeria pomeroyi (strain ATCC 700808 / DSM 15171 / DSS-3) (Silicibacter pomeroyi), this protein is Bifunctional enzyme IspD/IspF.